The chain runs to 548 residues: MAELTISASDIEGAIEDYVSSFTADSGREEIGVVIDAGDGIAHVEGLPSVMTQELLEFPGGVLGVALNLDEHSVGAVILGEFEKIEQGQQVKRTGEVLSVPVGDAFLGRVINPLGQPIDGQGDIEAEGRRALELQAPSVVQRQGVSEPLQTGIKAIDSMTPIGRGQRQLIIGDRKTGKTAVCVDTILNQREAWATGDPKQQVRCVYVAIGQKGTTIASVKRALEEGGAMECTTIVAAPASDAAGFKWLAPYTGSAIGQHWMYDGKHVLIVFDDLSKQADAYRAISLLLRRPPGREAFPGDVFYLHSRLLERCAKLSDELGGGSMTGLPIIETKANDISAFIPTNVISITDGQCFLESDLFNQGVRPAINVGVSVSRVGGAAQIKAMKEVAGSLRLELSQYRELEAFAAFASDLDAASKAQLDRGARLVELLKQPQYTPYPVEDQVVAIYLGTGGHLDSVPVEDVARFESELLEHVKASHGDILAGIRESKKLSEEAEQKLANVINEFKKGFSASDGSSVVVNEAEAEAMDEADVEKESVKVRKPAPKK.

172–179 (GDRKTGKT) lines the ATP pocket. The interval 526–548 (AEAMDEADVEKESVKVRKPAPKK) is disordered.

This sequence belongs to the ATPase alpha/beta chains family. As to quaternary structure, F-type ATPases have 2 components, CF(1) - the catalytic core - and CF(0) - the membrane proton channel. CF(1) has five subunits: alpha(3), beta(3), gamma(1), delta(1), epsilon(1). CF(0) has three main subunits: a(1), b(2) and c(9-12). The alpha and beta chains form an alternating ring which encloses part of the gamma chain. CF(1) is attached to CF(0) by a central stalk formed by the gamma and epsilon chains, while a peripheral stalk is formed by the delta and b chains.

The protein resides in the cell membrane. The catalysed reaction is ATP + H2O + 4 H(+)(in) = ADP + phosphate + 5 H(+)(out). Its function is as follows. Produces ATP from ADP in the presence of a proton gradient across the membrane. The alpha chain is a regulatory subunit. The chain is ATP synthase subunit alpha from Mycolicibacterium vanbaalenii (strain DSM 7251 / JCM 13017 / BCRC 16820 / KCTC 9966 / NRRL B-24157 / PYR-1) (Mycobacterium vanbaalenii).